The following is a 172-amino-acid chain: Endoribonuclease YbeY (172 aa).

Zn(2+) is bound by residues His137, His141, and His147.

This sequence belongs to the endoribonuclease YbeY family. The cofactor is Zn(2+).

Its subcellular location is the cytoplasm. Its function is as follows. Single strand-specific metallo-endoribonuclease involved in late-stage 70S ribosome quality control and in maturation of the 3' terminus of the 16S rRNA. The polypeptide is Endoribonuclease YbeY (Dehalococcoides mccartyi (strain ATCC BAA-2266 / KCTC 15142 / 195) (Dehalococcoides ethenogenes (strain 195))).